A 148-amino-acid polypeptide reads, in one-letter code: Small ribosomal subunit protein uS15 (148 aa).

The span at 1-14 (MGRLHSHRHGKSHS) shows a compositional bias: basic residues. A disordered region spans residues 1 to 27 (MGRLHSHRHGKSHSIRPSSPKAPSWIQ).

This sequence belongs to the universal ribosomal protein uS15 family. In terms of assembly, part of the 30S ribosomal subunit.

This chain is Small ribosomal subunit protein uS15, found in Cenarchaeum symbiosum (strain A).